The sequence spans 354 residues: UDP-N-acetylglucosamine--N-acetylmuramyl-(pentapeptide) pyrophosphoryl-undecaprenol N-acetylglucosamine transferase (354 aa).

UDP-N-acetyl-alpha-D-glucosamine is bound by residues 14–16, asparagine 126, arginine 162, serine 190, isoleucine 243, 262–267, and glutamine 287; these read TGG and ALTVSE.

It belongs to the glycosyltransferase 28 family. MurG subfamily.

The protein resides in the cell inner membrane. The catalysed reaction is di-trans,octa-cis-undecaprenyl diphospho-N-acetyl-alpha-D-muramoyl-L-alanyl-D-glutamyl-meso-2,6-diaminopimeloyl-D-alanyl-D-alanine + UDP-N-acetyl-alpha-D-glucosamine = di-trans,octa-cis-undecaprenyl diphospho-[N-acetyl-alpha-D-glucosaminyl-(1-&gt;4)]-N-acetyl-alpha-D-muramoyl-L-alanyl-D-glutamyl-meso-2,6-diaminopimeloyl-D-alanyl-D-alanine + UDP + H(+). Its pathway is cell wall biogenesis; peptidoglycan biosynthesis. In terms of biological role, cell wall formation. Catalyzes the transfer of a GlcNAc subunit on undecaprenyl-pyrophosphoryl-MurNAc-pentapeptide (lipid intermediate I) to form undecaprenyl-pyrophosphoryl-MurNAc-(pentapeptide)GlcNAc (lipid intermediate II). The protein is UDP-N-acetylglucosamine--N-acetylmuramyl-(pentapeptide) pyrophosphoryl-undecaprenol N-acetylglucosamine transferase of Photobacterium profundum (strain SS9).